Reading from the N-terminus, the 113-residue chain is Ribosome-binding factor A (113 aa).

Belongs to the RbfA family. In terms of assembly, monomer. Binds 30S ribosomal subunits, but not 50S ribosomal subunits or 70S ribosomes.

The protein localises to the cytoplasm. Functionally, one of several proteins that assist in the late maturation steps of the functional core of the 30S ribosomal subunit. Associates with free 30S ribosomal subunits (but not with 30S subunits that are part of 70S ribosomes or polysomes). Required for efficient processing of 16S rRNA. May interact with the 5'-terminal helix region of 16S rRNA. This is Ribosome-binding factor A from Oceanobacillus iheyensis (strain DSM 14371 / CIP 107618 / JCM 11309 / KCTC 3954 / HTE831).